The chain runs to 526 residues: ATP-dependent RNA helicase dbp8 (526 aa).

The disordered stretch occupies residues 1–77; sequence MTSPVPSEPV…DAKPAAPAGQ (77 aa). Positions 17–31 are enriched in polar residues; the sequence is SSSGSEVEPSKTSTR. Residues 96–124 carry the Q motif motif; the sequence is SSFAALNVAPWLVGSLTTMAVRKPTAIQK. Residues 127–306 form the Helicase ATP-binding domain; it reads IPEILKGRDC…NMPRSANKPP (180 aa). Position 140–147 (140–147) interacts with ATP; the sequence is SRTGSGKT. Positions 249 to 252 match the DEAD box motif; the sequence is DEAD. Residues 338-485 form the Helicase C-terminal domain; it reads AFLHVLLSTE…EWSEEGVSIE (148 aa).

It belongs to the DEAD box helicase family. DDX49/DBP8 subfamily.

It localises to the nucleus. It is found in the nucleolus. The enzyme catalyses ATP + H2O = ADP + phosphate + H(+). ATP-binding RNA helicase involved in 40S ribosomal subunit biogenesis and is required for the normal formation of 18S rRNAs through pre-rRNA processing at A0, A1 and A2 sites. Required for vegetative growth. This chain is ATP-dependent RNA helicase dbp8 (dbp8), found in Aspergillus fumigatus (strain ATCC MYA-4609 / CBS 101355 / FGSC A1100 / Af293) (Neosartorya fumigata).